The sequence spans 522 residues: Exo-alpha-(1-&gt;6)-L-arabinofuranosidase (522 aa).

Positions 39, 84, and 185 each coordinate alpha-L-arabinofuranose. Glu-186 functions as the Proton donor/acceptor in the catalytic mechanism. 3 residues coordinate alpha-L-arabinofuranose: Tyr-257, Glu-310, and Gln-370. Residue Glu-310 is the Nucleophile of the active site.

It belongs to the glycosyl hydrolase 51 family. As to quaternary structure, homohexamer; trimer of dimers.

It carries out the reaction Hydrolysis of terminal non-reducing alpha-L-arabinofuranoside residues in alpha-L-arabinosides.. It catalyses the reaction (20S)-ginsenoside Rc + H2O = L-arabinofuranose + (20S)-ginsenoside Rd. Its activity is regulated as follows. Completely inhibited by Cu(2+) and partially inhibited by Co(2+) and Ba(2+). Catalyzes the hydrolysis of p-nitrophenyl-alpha-L-arabinofuranoside (pNP-alphaL-Af) and the hydrolysis of the terminal alpha-L-arabinofuranoside at the C20 position of ginsenoside Rc to produce ginsenoside Rd. Cannot hydrolyze p-nitrophenyl-alpha-L-arabinopyranoside (pNP-alphaL-Ap) and ginsenoside Rb2. The sequence is that of Exo-alpha-(1-&gt;6)-L-arabinofuranosidase from Bifidobacterium longum.